Here is a 430-residue protein sequence, read N- to C-terminus: Enolase (430 aa).

Q163 lines the (2R)-2-phosphoglycerate pocket. Residue E205 is the Proton donor of the active site. 3 residues coordinate Mg(2+): D242, E287, and D314. (2R)-2-phosphoglycerate is bound by residues K339, R368, S369, and K390. K339 acts as the Proton acceptor in catalysis.

The protein belongs to the enolase family. Mg(2+) serves as cofactor.

Its subcellular location is the cytoplasm. It is found in the secreted. The protein localises to the cell surface. It catalyses the reaction (2R)-2-phosphoglycerate = phosphoenolpyruvate + H2O. It participates in carbohydrate degradation; glycolysis; pyruvate from D-glyceraldehyde 3-phosphate: step 4/5. Its function is as follows. Catalyzes the reversible conversion of 2-phosphoglycerate (2-PG) into phosphoenolpyruvate (PEP). It is essential for the degradation of carbohydrates via glycolysis. The polypeptide is Enolase (Bacillus licheniformis (strain ATCC 14580 / DSM 13 / JCM 2505 / CCUG 7422 / NBRC 12200 / NCIMB 9375 / NCTC 10341 / NRRL NRS-1264 / Gibson 46)).